A 93-amino-acid polypeptide reads, in one-letter code: Putative pterin-4-alpha-carbinolamine dehydratase (93 aa).

It belongs to the pterin-4-alpha-carbinolamine dehydratase family.

It carries out the reaction (4aS,6R)-4a-hydroxy-L-erythro-5,6,7,8-tetrahydrobiopterin = (6R)-L-erythro-6,7-dihydrobiopterin + H2O. In Nostoc punctiforme (strain ATCC 29133 / PCC 73102), this protein is Putative pterin-4-alpha-carbinolamine dehydratase.